The following is a 527-amino-acid chain: 2-isopropylmalate synthase (527 aa).

Positions 18–280 (IRIFDTTLRD…QTNINSKRLV (263 aa)) constitute a Pyruvate carboxyltransferase domain. Residues Asp27, His215, His217, and Asn251 each contribute to the Mn(2+) site. Residues 405–527 (TLVDYEVTSG…ASDPGELPQP (123 aa)) are regulatory domain.

This sequence belongs to the alpha-IPM synthase/homocitrate synthase family. LeuA type 1 subfamily. In terms of assembly, homodimer. The cofactor is Mn(2+).

The protein resides in the cytoplasm. The enzyme catalyses 3-methyl-2-oxobutanoate + acetyl-CoA + H2O = (2S)-2-isopropylmalate + CoA + H(+). Its pathway is amino-acid biosynthesis; L-leucine biosynthesis; L-leucine from 3-methyl-2-oxobutanoate: step 1/4. Functionally, catalyzes the condensation of the acetyl group of acetyl-CoA with 3-methyl-2-oxobutanoate (2-ketoisovalerate) to form 3-carboxy-3-hydroxy-4-methylpentanoate (2-isopropylmalate). In Rhodopirellula baltica (strain DSM 10527 / NCIMB 13988 / SH1), this protein is 2-isopropylmalate synthase.